The chain runs to 100 residues: Urease subunit gamma (100 aa).

This sequence belongs to the urease gamma subunit family. Heterotrimer of UreA (gamma), UreB (beta) and UreC (alpha) subunits. Three heterotrimers associate to form the active enzyme.

Its subcellular location is the cytoplasm. The enzyme catalyses urea + 2 H2O + H(+) = hydrogencarbonate + 2 NH4(+). Its pathway is nitrogen metabolism; urea degradation; CO(2) and NH(3) from urea (urease route): step 1/1. The protein is Urease subunit gamma of Haemophilus influenzae (strain ATCC 51907 / DSM 11121 / KW20 / Rd).